The primary structure comprises 237 residues: Sugar fermentation stimulation protein homolog (237 aa).

It belongs to the SfsA family.

The sequence is that of Sugar fermentation stimulation protein homolog from Actinobacillus pleuropneumoniae serotype 5b (strain L20).